The following is a 350-amino-acid chain: Probable galactose-1-phosphate uridylyltransferase (350 aa).

The tract at residues 31-52 is disordered; sequence PWSGQQEKAQKNELPEFDPTNP. C54 is a binding site for Zn(2+). UDP-alpha-D-glucose-binding positions include 76 to 77 and N152; that span reads ND. Zn(2+) is bound at residue H163. Catalysis depends on H165, which acts as the Tele-UMP-histidine intermediate. Residues Q167, 314–317, and 319–320 contribute to the UDP-alpha-D-glucose site; these read KFMV and FE.

Belongs to the galactose-1-phosphate uridylyltransferase type 1 family. As to quaternary structure, homodimer. The cofactor is Zn(2+).

It carries out the reaction alpha-D-galactose 1-phosphate + UDP-alpha-D-glucose = alpha-D-glucose 1-phosphate + UDP-alpha-D-galactose. It functions in the pathway carbohydrate metabolism; galactose metabolism. The protein is Probable galactose-1-phosphate uridylyltransferase (Galt) of Drosophila melanogaster (Fruit fly).